We begin with the raw amino-acid sequence, 343 residues long: Geranylgeranyl pyrophosphate synthase 1 (343 aa).

Lys43, Arg46, and His75 together coordinate isopentenyl diphosphate. The Mg(2+) site is built by Asp82 and Asp86. Residue Arg91 coordinates dimethylallyl diphosphate. Arg92 is a binding site for isopentenyl diphosphate. Dimethylallyl diphosphate-binding residues include Lys169, Thr170, and Gln212. Asp215 is a Mg(2+) binding site. 3 residues coordinate dimethylallyl diphosphate: Asn219, Lys229, and Lys239.

It belongs to the FPP/GGPP synthase family. The cofactor is Mg(2+).

It catalyses the reaction isopentenyl diphosphate + dimethylallyl diphosphate = (2E)-geranyl diphosphate + diphosphate. The catalysed reaction is isopentenyl diphosphate + (2E)-geranyl diphosphate = (2E,6E)-farnesyl diphosphate + diphosphate. The enzyme catalyses isopentenyl diphosphate + (2E,6E)-farnesyl diphosphate = (2E,6E,10E)-geranylgeranyl diphosphate + diphosphate. Functionally, geranylgeranyl pyrophosphate synthase; part of the gene cluster 4 that mediates the biosynthesis of an isoprenoid secondary metabolite. This Zymoseptoria tritici (strain CBS 115943 / IPO323) (Speckled leaf blotch fungus) protein is Geranylgeranyl pyrophosphate synthase 1 (GGS1).